The chain runs to 292 residues: Large ribosomal subunit protein uL4 (292 aa).

2 stretches are compositionally biased toward basic and acidic residues: residues 1–33 and 42–51; these read MVEV…DKTA and KVSDKAESTP. 2 disordered regions span residues 1–59 and 132–158; these read MVEV…VKTS and GTHK…TGKA.

Belongs to the universal ribosomal protein uL4 family. In terms of assembly, part of the 50S ribosomal subunit.

One of the primary rRNA binding proteins, this protein initially binds near the 5'-end of the 23S rRNA. It is important during the early stages of 50S assembly. It makes multiple contacts with different domains of the 23S rRNA in the assembled 50S subunit and ribosome. Its function is as follows. Forms part of the polypeptide exit tunnel. This chain is Large ribosomal subunit protein uL4, found in Mycoplasmopsis pulmonis (strain UAB CTIP) (Mycoplasma pulmonis).